The chain runs to 134 residues: Large ribosomal subunit protein mL41 (134 aa).

A mitochondrion-targeting transit peptide spans 1–13; it reads MGFLTAVTQGLVR.

Belongs to the mitochondrion-specific ribosomal protein mL41 family. In terms of assembly, component of the mitochondrial ribosome large subunit (39S) which comprises a 16S rRNA and about 50 distinct proteins. Interacts with BCL2. Was also identified in the 28S mitochondrial ribosome.

The protein localises to the mitochondrion. In terms of biological role, component of the mitochondrial ribosome large subunit. Also involved in apoptosis and cell cycle. Enhances p53/TP53 stability, thereby contributing to p53/TP53-induced apoptosis in response to growth-inhibitory condition. Enhances p53/TP53 translocation to the mitochondria. Has the ability to arrest the cell cycle at the G1 phase, possibly by stabilizing the CDKN1A and CDKN1B (p27Kip1) proteins. The protein is Large ribosomal subunit protein mL41 (Mrpl41) of Rattus norvegicus (Rat).